An 831-amino-acid chain; its full sequence is Translation initiation factor IF-2 (831 aa).

The tr-type G domain occupies 329 to 499; it reads TRAPVVTVMG…LLIAEMQDLK (171 aa). The tract at residues 338–345 is G1; that stretch reads GHVDHGKT. 338–345 contributes to the GTP binding site; the sequence is GHVDHGKT. The tract at residues 363–367 is G2; sequence GITQH. The segment at 385–388 is G3; sequence DTPG. Residues 385–389 and 439–442 contribute to the GTP site; these read DTPGH and NKID. Positions 439–442 are G4; it reads NKID. The segment at 475–477 is G5; it reads SAL.

The protein belongs to the TRAFAC class translation factor GTPase superfamily. Classic translation factor GTPase family. IF-2 subfamily.

The protein resides in the cytoplasm. Functionally, one of the essential components for the initiation of protein synthesis. Protects formylmethionyl-tRNA from spontaneous hydrolysis and promotes its binding to the 30S ribosomal subunits. Also involved in the hydrolysis of GTP during the formation of the 70S ribosomal complex. The sequence is that of Translation initiation factor IF-2 from Rickettsia rickettsii (strain Iowa).